The primary structure comprises 403 residues: Ubiquitin-like modifier-activating enzyme 5 (403 aa).

5 residues coordinate ATP: G81, D102, K125, N148, and N182. Residues C224 and C227 each coordinate Zn(2+). C248 (glycyl thioester intermediate) is an active-site residue. Zn(2+)-binding residues include C301 and C306. Residues 306 to 315 (CRKQQEEYKK) show a composition bias toward basic and acidic residues. Residues 306-337 (CRKQQEEYKKRAPAQPTQETAPQEEEEVVHED) form a disordered region. Residues 333–345 (VVHEDNEWGIELV) carry the UFM1-interacting sequence (UIS) motif. Residues 346–376 (SEVSEEELKNSSGPVPTLPEGITVAYTVPKK) are linker. 2 positions are modified to phosphoserine: S357 and S392. The UFC1-binding sequence (UFC) signature appears at 388–403 (DSGESLEDLMARMKKM).

This sequence belongs to the ubiquitin-activating E1 family. UBA5 subfamily. As to quaternary structure, homodimer; homodimerization is required for UFM1 activation. Interacts (via UIS motif) with UFM1; binds UFM1 via a trans-binding mechanism in which UFM1 interacts with distinct sites in both subunits of the UBA5 homodimer. Interacts (via C-terminus) with UFC1. Interacts (via UIS motif) with GABARAPL2 and, with lower affinity, with GABARAP and GABARAPL1.

It is found in the cytoplasm. Its subcellular location is the nucleus. It localises to the endoplasmic reticulum membrane. The protein localises to the golgi apparatus. Functionally, E1-like enzyme which specifically catalyzes the first step in ufmylation. Activates UFM1 by first adenylating its C-terminal glycine residue with ATP, and thereafter linking this residue to the side chain of a cysteine residue in E1, yielding a UFM1-E1 thioester and free AMP. Activates UFM1 via a trans-binding mechanism, in which UFM1 interacts with distinct sites in both subunits of the UBA5 homodimer. Trans-binding also promotes stabilization of the UBA5 homodimer, and enhances ATP-binding. Transfer of UFM1 from UBA5 to the E2-like enzyme UFC1 also takes place using a trans mechanism. Ufmylation plays a key role in various processes, such as ribosome recycling, response to DNA damage, interferon response or reticulophagy (also called ER-phagy). Ufmylation is essential for erythroid differentiation of both megakaryocytes and erythrocytes. The chain is Ubiquitin-like modifier-activating enzyme 5 from Rattus norvegicus (Rat).